The sequence spans 267 residues: Tryptophan synthase alpha chain (267 aa).

Catalysis depends on proton acceptor residues E43 and D54.

Belongs to the TrpA family. Tetramer of two alpha and two beta chains.

The enzyme catalyses (1S,2R)-1-C-(indol-3-yl)glycerol 3-phosphate + L-serine = D-glyceraldehyde 3-phosphate + L-tryptophan + H2O. It participates in amino-acid biosynthesis; L-tryptophan biosynthesis; L-tryptophan from chorismate: step 5/5. Its function is as follows. The alpha subunit is responsible for the aldol cleavage of indoleglycerol phosphate to indole and glyceraldehyde 3-phosphate. This is Tryptophan synthase alpha chain from Bacillus pumilus (strain SAFR-032).